The chain runs to 272 residues: Putative imidazole glycerol phosphate synthase subunit hisF2 (272 aa).

The active site involves Asp-133.

This sequence belongs to the HisA/HisF family. In terms of assembly, heterodimer of HisH and HisF.

It is found in the cytoplasm. The catalysed reaction is 5-[(5-phospho-1-deoxy-D-ribulos-1-ylimino)methylamino]-1-(5-phospho-beta-D-ribosyl)imidazole-4-carboxamide + L-glutamine = D-erythro-1-(imidazol-4-yl)glycerol 3-phosphate + 5-amino-1-(5-phospho-beta-D-ribosyl)imidazole-4-carboxamide + L-glutamate + H(+). The protein operates within amino-acid biosynthesis; L-histidine biosynthesis; L-histidine from 5-phospho-alpha-D-ribose 1-diphosphate: step 5/9. Functionally, IGPS catalyzes the conversion of PRFAR and glutamine to IGP, AICAR and glutamate. The HisF subunit catalyzes the cyclization activity that produces IGP and AICAR from PRFAR using the ammonia provided by the HisH subunit. This is Putative imidazole glycerol phosphate synthase subunit hisF2 (hisF2) from Vibrio vulnificus (strain YJ016).